We begin with the raw amino-acid sequence, 111 residues long: uncharacterized protein (111 aa).

Residues 3–29 (RKITSYKTSLQGLREENEDVELMNLNL) adopt a coiled-coil conformation. Residues 6–111 (TSYKTSLQGL…TWWMYCSSYY (106 aa)) enclose the PPM-type phosphatase domain.

This is an uncharacterized protein from Acanthamoeba polyphaga mimivirus (APMV).